The primary structure comprises 113 residues: Small ribosomal subunit protein eS24 (113 aa).

This sequence belongs to the eukaryotic ribosomal protein eS24 family.

The protein is Small ribosomal subunit protein eS24 of Metallosphaera sedula (strain ATCC 51363 / DSM 5348 / JCM 9185 / NBRC 15509 / TH2).